A 205-amino-acid polypeptide reads, in one-letter code: Small ribosomal subunit protein uS4 (205 aa).

The segment at 1–46 (MSKRASSKYKIDRRMGENIWGRPKSPVNRREYGPGQHGQRRKGKLS) is disordered. Positions 94–154 (SRLDAIVYRA…QKSKQLAIVL (61 aa)) constitute an S4 RNA-binding domain.

Belongs to the universal ribosomal protein uS4 family. As to quaternary structure, part of the 30S ribosomal subunit. Contacts protein S5. The interaction surface between S4 and S5 is involved in control of translational fidelity.

Its function is as follows. One of the primary rRNA binding proteins, it binds directly to 16S rRNA where it nucleates assembly of the body of the 30S subunit. With S5 and S12 plays an important role in translational accuracy. This Allorhizobium ampelinum (strain ATCC BAA-846 / DSM 112012 / S4) (Agrobacterium vitis (strain S4)) protein is Small ribosomal subunit protein uS4.